A 377-amino-acid chain; its full sequence is Glutamate 5-kinase (377 aa).

Lysine 20 serves as a coordination point for ATP. 3 residues coordinate substrate: serine 60, aspartate 147, and asparagine 159. 179–180 (TD) is a binding site for ATP. In terms of domain architecture, PUA spans 285-363 (AGRLVIDAGA…DKVHQVLGEA (79 aa)).

It belongs to the glutamate 5-kinase family.

The protein resides in the cytoplasm. It catalyses the reaction L-glutamate + ATP = L-glutamyl 5-phosphate + ADP. It participates in amino-acid biosynthesis; L-proline biosynthesis; L-glutamate 5-semialdehyde from L-glutamate: step 1/2. Catalyzes the transfer of a phosphate group to glutamate to form L-glutamate 5-phosphate. The sequence is that of Glutamate 5-kinase from Acinetobacter baylyi (strain ATCC 33305 / BD413 / ADP1).